We begin with the raw amino-acid sequence, 166 residues long: Small ribosomal subunit protein uS5 (166 aa).

Residues 11–74 form the S5 DRBM domain; the sequence is LQEKLIAVNR…EKARRNMINV (64 aa).

This sequence belongs to the universal ribosomal protein uS5 family. In terms of assembly, part of the 30S ribosomal subunit. Contacts proteins S4 and S8.

With S4 and S12 plays an important role in translational accuracy. Functionally, located at the back of the 30S subunit body where it stabilizes the conformation of the head with respect to the body. The sequence is that of Small ribosomal subunit protein uS5 from Haemophilus ducreyi (strain 35000HP / ATCC 700724).